Here is a 408-residue protein sequence, read N- to C-terminus: (R)-2-hydroxyisocaproyl-CoA dehydratase alpha subunit (408 aa).

Glutamate 55 contacts substrate. [4Fe-4S] cluster is bound by residues cysteine 84, cysteine 117, and cysteine 346.

Belongs to the FldB/FldC dehydratase alpha/beta subunit family. As to quaternary structure, part of the heterodimeric complex HadBC composed of (R)-2-hydroxyisocaproyl-CoA dehydratase alpha (HadB) and beta (HadC) subunit. It depends on [4Fe-4S] cluster as a cofactor.

The enzyme catalyses (R)-2-hydroxy-4-methylpentanoyl-CoA = 4-methylpent-2-enoyl-CoA + H2O. Its activity is regulated as follows. Activated by HadI. Involved in the reductive branch of L-leucine fermentation. Catalyzes the irreversible beta/alpha-elimination of water from (R)-2-hydroxyisocaproyl-CoA to yield isocaprenoyl-CoA. This beta/alpha-dehydration depends on the reductive formation of ketyl radicals on the substrate generated by injection of a single electron from the ATP-dependent activator protein HadI. The enzyme is specific for the R-isomer. The polypeptide is (R)-2-hydroxyisocaproyl-CoA dehydratase alpha subunit (Clostridioides difficile (Peptoclostridium difficile)).